Here is a 186-residue protein sequence, read N- to C-terminus: MSVADTKKGVEQKMQRSIDAFKSDLAKIRTGRAHTGMLDHVQVDYYGSMVPISQVANMTLVDARTIGVQPWEKPMVAKVEKAIREADLGLNPATSGDQIRVPMPALTEERRRELTKVVKSEGETAKVAIRNLRRDANEALKKLVKDKEISEDDERRASDDVQKLTDKHVAEIDKLVQSKEAEIMTV.

Belongs to the RRF family.

The protein localises to the cytoplasm. Responsible for the release of ribosomes from messenger RNA at the termination of protein biosynthesis. May increase the efficiency of translation by recycling ribosomes from one round of translation to another. This chain is Ribosome-recycling factor, found in Burkholderia lata (strain ATCC 17760 / DSM 23089 / LMG 22485 / NCIMB 9086 / R18194 / 383).